A 265-amino-acid chain; its full sequence is uncharacterized protein (265 aa).

This is an uncharacterized protein from Mycoplasma capricolum subsp. capricolum (strain California kid / ATCC 27343 / NCTC 10154).